The chain runs to 284 residues: Distal membrane arm assembly component 2 (284 aa).

It belongs to the ATP synthase subunit s family. In terms of assembly, associates with mitochondrial complex I assembly intermediates during its biogenesis.

In terms of biological role, involved in the assembly of the mitochondrial membrane respiratory chain NADH dehydrogenase (Complex I). In Drosophila melanogaster (Fruit fly), this protein is Distal membrane arm assembly component 2.